The sequence spans 209 residues: Thiamine-phosphate synthase (209 aa).

Residues 37-41 (QLREK) and Asn69 contribute to the 4-amino-2-methyl-5-(diphosphooxymethyl)pyrimidine site. Positions 70 and 89 each coordinate Mg(2+). Ser108 contacts 4-amino-2-methyl-5-(diphosphooxymethyl)pyrimidine. Residue 134-136 (TNT) coordinates 2-[(2R,5Z)-2-carboxy-4-methylthiazol-5(2H)-ylidene]ethyl phosphate. Lys137 contributes to the 4-amino-2-methyl-5-(diphosphooxymethyl)pyrimidine binding site. Residues Gly164 and 184–185 (VS) contribute to the 2-[(2R,5Z)-2-carboxy-4-methylthiazol-5(2H)-ylidene]ethyl phosphate site.

It belongs to the thiamine-phosphate synthase family. The cofactor is Mg(2+).

It carries out the reaction 2-[(2R,5Z)-2-carboxy-4-methylthiazol-5(2H)-ylidene]ethyl phosphate + 4-amino-2-methyl-5-(diphosphooxymethyl)pyrimidine + 2 H(+) = thiamine phosphate + CO2 + diphosphate. The enzyme catalyses 2-(2-carboxy-4-methylthiazol-5-yl)ethyl phosphate + 4-amino-2-methyl-5-(diphosphooxymethyl)pyrimidine + 2 H(+) = thiamine phosphate + CO2 + diphosphate. The catalysed reaction is 4-methyl-5-(2-phosphooxyethyl)-thiazole + 4-amino-2-methyl-5-(diphosphooxymethyl)pyrimidine + H(+) = thiamine phosphate + diphosphate. The protein operates within cofactor biosynthesis; thiamine diphosphate biosynthesis; thiamine phosphate from 4-amino-2-methyl-5-diphosphomethylpyrimidine and 4-methyl-5-(2-phosphoethyl)-thiazole: step 1/1. In terms of biological role, condenses 4-methyl-5-(beta-hydroxyethyl)thiazole monophosphate (THZ-P) and 2-methyl-4-amino-5-hydroxymethyl pyrimidine pyrophosphate (HMP-PP) to form thiamine monophosphate (TMP). The chain is Thiamine-phosphate synthase from Methanobrevibacter smithii (strain ATCC 35061 / DSM 861 / OCM 144 / PS).